We begin with the raw amino-acid sequence, 194 residues long: MTAITITDAAHDYLADLLSKQNTPGIGIRVFITQPGTQYAETCIAYCKPGEEKPEDTALGLKSFTAYIDSFSEAFLDDAVVDYATDRMGGQLTIKAPNAKVPMVNADSPINERINYYLQTEINPGLASHGGQVSLIDVVEDGIAVLQFGGGCQGCGQADVTLKEGIERTLLERIPELKGVRDVTDHTQKENAYY.

[4Fe-4S] cluster-binding residues include cysteine 152 and cysteine 155.

It belongs to the NfuA family. As to quaternary structure, homodimer. [4Fe-4S] cluster is required as a cofactor.

Functionally, involved in iron-sulfur cluster biogenesis. Binds a 4Fe-4S cluster, can transfer this cluster to apoproteins, and thereby intervenes in the maturation of Fe/S proteins. Could also act as a scaffold/chaperone for damaged Fe/S proteins. The polypeptide is Fe/S biogenesis protein NfuA (Pseudomonas fluorescens (strain Pf0-1)).